The following is a 462-amino-acid chain: tRNA modification GTPase MnmE (462 aa).

The (6S)-5-formyl-5,6,7,8-tetrahydrofolate site is built by Arg-27, Glu-89, and Arg-128. One can recognise a TrmE-type G domain in the interval 223 to 383 (GLKIAIVGRP…LEAAILAAVG (161 aa)). Residue Asn-233 coordinates K(+). GTP contacts are provided by residues 233–238 (NVGKSS), 252–258 (TDLPGTT), and 277–280 (DTAG). Ser-237 lines the Mg(2+) pocket. Thr-252, Leu-254, and Thr-257 together coordinate K(+). Residue Thr-258 participates in Mg(2+) binding. A (6S)-5-formyl-5,6,7,8-tetrahydrofolate-binding site is contributed by Lys-462.

It belongs to the TRAFAC class TrmE-Era-EngA-EngB-Septin-like GTPase superfamily. TrmE GTPase family. Homodimer. Heterotetramer of two MnmE and two MnmG subunits. Requires K(+) as cofactor.

It is found in the cytoplasm. Functionally, exhibits a very high intrinsic GTPase hydrolysis rate. Involved in the addition of a carboxymethylaminomethyl (cmnm) group at the wobble position (U34) of certain tRNAs, forming tRNA-cmnm(5)s(2)U34. This Synechococcus elongatus (strain ATCC 33912 / PCC 7942 / FACHB-805) (Anacystis nidulans R2) protein is tRNA modification GTPase MnmE.